A 202-amino-acid chain; its full sequence is Na(+)-translocating NADH-quinone reductase subunit E (202 aa).

The next 6 helical transmembrane spans lie at S11 to V31, M39 to V59, L79 to E99, G114 to V134, I144 to V164, and L180 to V200.

Belongs to the NqrDE/RnfAE family. Composed of six subunits; NqrA, NqrB, NqrC, NqrD, NqrE and NqrF.

The protein resides in the cell inner membrane. It carries out the reaction a ubiquinone + n Na(+)(in) + NADH + H(+) = a ubiquinol + n Na(+)(out) + NAD(+). Its function is as follows. NQR complex catalyzes the reduction of ubiquinone-1 to ubiquinol by two successive reactions, coupled with the transport of Na(+) ions from the cytoplasm to the periplasm. NqrA to NqrE are probably involved in the second step, the conversion of ubisemiquinone to ubiquinol. This is Na(+)-translocating NADH-quinone reductase subunit E from Pseudoalteromonas atlantica (strain T6c / ATCC BAA-1087).